A 407-amino-acid chain; its full sequence is MTNQTVRGTKDLLFDEWYKFKHIEQTASRISSLYGFLPVQTPIFEYTEVFTKTLGDSSDIITKEMYTFIDKGGKSITLRPEFTAAIVRLLIEKKLQAPIKLFSIGPAFRYERPQKGRQRQFHQINFEVFGIEDPKADIELISLAQHLLTEFGINKNVKLEINSLGDSETITQYREALISYLKKFQNDLSEDSQNRLIKNPLRILDSKDKTDKEIISDAPKISDYYTKESSYFFDQVLNGLQALGIPYTVNSKLVRGLDYYCHTVFEFVTEDLGAQGAVFAGGRYDNLVSSVGGKHTPAIGFAGGIERIMELINYAEKKERPIYIIPIGGEAEEHALTLASELRRNGLYVIYEYSGTLKTRMKKANQANAKVVLIFGDEELSSKTLKIKNMDTGEEKMIARDKTVENI.

This sequence belongs to the class-II aminoacyl-tRNA synthetase family. In terms of assembly, homodimer.

Its subcellular location is the cytoplasm. The catalysed reaction is tRNA(His) + L-histidine + ATP = L-histidyl-tRNA(His) + AMP + diphosphate + H(+). The sequence is that of Histidine--tRNA ligase from Wolbachia pipientis subsp. Culex pipiens (strain wPip).